The sequence spans 166 residues: MAHIEKQAGELQEKLIAVNRVSKTVKGGRIFSFTALTVVGDGNGRVGFGYGKAREVPAAIQKAMEKARRNMMNVALNSGTLQHPVKGAHTGSRVFMQPASEGTGIIAGGAMXXXXXXXXXXXXXXXAYGSTNPINVVRATIDALANMKSPEMVAAKLGKSVADILG.

Residues 11–74 (LQEKLIAVNR…EKARRNMMNV (64 aa)) enclose the S5 DRBM domain.

This sequence belongs to the universal ribosomal protein uS5 family. In terms of assembly, part of the 30S ribosomal subunit. Contacts proteins S4 and S8.

Functionally, with S4 and S12 plays an important role in translational accuracy. In terms of biological role, located at the back of the 30S subunit body where it stabilizes the conformation of the head with respect to the body. The sequence is that of Small ribosomal subunit protein uS5 from Buchnera aphidicola subsp. Acyrthosiphon kondoi (Acyrthosiphon kondoi symbiotic bacterium).